A 406-amino-acid polypeptide reads, in one-letter code: Flavohemoprotein (406 aa).

One can recognise a Globin domain in the interval 6–144 (VLLDKKTTEI…IADIFISVEK (139 aa)). H91 lines the heme b pocket. Active-site charge relay system residues include Y101 and E143. Positions 155 to 406 (GGWTGFRDFK…LFGPLEPIAK (252 aa)) are reductase. One can recognise an FAD-binding FR-type domain in the interval 158 to 267 (TGFRDFKVIK…SAPAGDFILD (110 aa)). Residues Y196 and 212–215 (RQYS) each bind FAD. 280–285 (GVGLTP) provides a ligand contact to NADP(+). Position 397–400 (397–400 (LFGP)) interacts with FAD.

This sequence belongs to the globin family. Two-domain flavohemoproteins subfamily. It in the C-terminal section; belongs to the flavoprotein pyridine nucleotide cytochrome reductase family. Heme b serves as cofactor. FAD is required as a cofactor.

It catalyses the reaction 2 nitric oxide + NADPH + 2 O2 = 2 nitrate + NADP(+) + H(+). The catalysed reaction is 2 nitric oxide + NADH + 2 O2 = 2 nitrate + NAD(+) + H(+). Its function is as follows. Is involved in NO detoxification in an aerobic process, termed nitric oxide dioxygenase (NOD) reaction that utilizes O(2) and NAD(P)H to convert NO to nitrate, which protects the bacterium from various noxious nitrogen compounds. Therefore, plays a central role in the inducible response to nitrosative stress. The protein is Flavohemoprotein of Oceanobacillus iheyensis (strain DSM 14371 / CIP 107618 / JCM 11309 / KCTC 3954 / HTE831).